A 309-amino-acid polypeptide reads, in one-letter code: Porphobilinogen deaminase (309 aa).

C240 bears the S-(dipyrrolylmethanemethyl)cysteine mark.

The protein belongs to the HMBS family. As to quaternary structure, monomer. Requires dipyrromethane as cofactor.

It catalyses the reaction 4 porphobilinogen + H2O = hydroxymethylbilane + 4 NH4(+). The protein operates within porphyrin-containing compound metabolism; protoporphyrin-IX biosynthesis; coproporphyrinogen-III from 5-aminolevulinate: step 2/4. Functionally, tetrapolymerization of the monopyrrole PBG into the hydroxymethylbilane pre-uroporphyrinogen in several discrete steps. The chain is Porphobilinogen deaminase from Chromobacterium violaceum (strain ATCC 12472 / DSM 30191 / JCM 1249 / CCUG 213 / NBRC 12614 / NCIMB 9131 / NCTC 9757 / MK).